The chain runs to 241 residues: Outer membrane protein A (241 aa).

5 beta stranded membrane passes run 1-8 (LTAKLSYP), 13-21 (LDIYTRLGG), 46-55 (PVFAGGVEYA), 60-67 (IATRLEYQ), and 86-94 (MLSVGVSYR). Tandem repeats lie at residues 105–106 (AP), 107–108 (AP), 109–110 (AP), and 111–112 (AP). The interval 105 to 112 (APAPAPAP) is 4 X 2 AA tandem repeats of A-P. One can recognise an OmpA-like domain in the interval 114-241 (VQTKHFTLKS…RRVEIEVKGV (128 aa)). C215 and C227 are joined by a disulfide.

It belongs to the outer membrane OOP (TC 1.B.6) superfamily. OmpA family. In terms of assembly, monomer and homodimer.

Its subcellular location is the cell outer membrane. Functionally, with TolR probably plays a role in maintaining the position of the peptidoglycan cell wall in the periplasm. Acts as a porin with low permeability that allows slow penetration of small solutes; an internal gate slows down solute passage. This chain is Outer membrane protein A, found in Shimwellia blattae (Escherichia blattae).